The following is a 132-amino-acid chain: Small ribosomal subunit protein uS8c (132 aa).

This sequence belongs to the universal ribosomal protein uS8 family. In terms of assembly, part of the 30S ribosomal subunit.

It localises to the plastid. The protein localises to the chloroplast. Functionally, one of the primary rRNA binding proteins, it binds directly to 16S rRNA central domain where it helps coordinate assembly of the platform of the 30S subunit. This is Small ribosomal subunit protein uS8c (rps8) from Calycanthus floridus var. glaucus (Eastern sweetshrub).